The following is a 1464-amino-acid chain: Neuropathy target esterase sws (1464 aa).

Residues 1-34 (MDVLELLRASATGCYNTIFSEAWHQYVHKQIAAA) lie on the Lumenal side of the membrane. Residues 35 to 55 (VYWYGALFLLGVLLFVWFLYF) form a helical membrane-spanning segment. Over 56–1464 (KRLARLRLRD…GNTTNNDTKN (1409 aa)) the chain is Cytoplasmic. 176-303 (IFGHFEKPIF…IRVIQVIMIR (128 aa)) serves as a coordination point for a nucleoside 3',5'-cyclic phosphate. Disordered stretches follow at residues 329-393 (NKNS…LHYH) and 409-438 (QQQQ…SSPT). Residues 338 to 367 (TGQTTSNVQSQTSQATQSRPSGTTRTPTSP) show a composition bias toward low complexity. Positions 409-420 (QQQQSLNSPRRN) are enriched in polar residues. Residue Ser-421 is modified to Phosphoserine. Low complexity predominate over residues 422 to 438 (TAHVSEAAAASTASSPT). Residues 456 to 586 (ELGL…VVRR) and 575 to 702 (IVLG…LSHR) each bind a nucleoside 3',5'-cyclic phosphate. The PNPLA domain maps to 928 to 1094 (LVLGGGGARG…VNNLPGHLWR (167 aa)). The GXGXXG motif lies at 932 to 937 (GGGARG). The GXSXG motif lies at 959 to 963 (GVSIG). The active-site Nucleophile is the Ser-961. The active-site Proton acceptor is Asp-1081. The DGA/G motif lies at 1081 to 1083 (DGG). At Ser-1175 the chain carries Phosphoserine. Disordered regions lie at residues 1352–1374 (VDKA…PTPS) and 1400–1464 (ATNT…DTKN). A compositionally biased stretch (basic and acidic residues) spans 1429–1444 (KRTEQDEHELEHEQVV). Polar residues predominate over residues 1450-1464 (MDKQQGNTTNNDTKN).

The protein belongs to the NTE family. In terms of assembly, interacts with Pka-C3; interaction inhibits the catalytic function of Pka-C3 and the esterase activity of sws.

Its subcellular location is the endoplasmic reticulum membrane. It carries out the reaction a 1-acyl-sn-glycero-3-phosphocholine + H2O = sn-glycerol 3-phosphocholine + a fatty acid + H(+). Functionally, phospholipase B that deacylates intracellular phosphatidylcholine (PtdCho), generating glycerophosphocholine (GroPtdCho). This deacylation occurs at both sn-2 and sn-1 positions of PtdCho. Its specific chemical modification by certain organophosphorus (OP) compounds leads to distal axonopathy. Plays a role in the signaling mechanism between neurons and glia that regulates glia wrapping during development of the adult brain. Essential for membrane lipid homeostasis and cell survival in both neurons and glia of the adult brain. In Drosophila grimshawi (Hawaiian fruit fly), this protein is Neuropathy target esterase sws.